We begin with the raw amino-acid sequence, 573 residues long: Arylsulfatase I (573 aa).

The signal sequence occupies residues 1–23 (MHALTGLSLVSLLSFGYLSWDWA). Residues aspartate 56, aspartate 57, and cysteine 94 each coordinate Ca(2+). Cysteine 94 acts as the Nucleophile in catalysis. A 3-oxoalanine (Cys) modification is found at cysteine 94. Position 148 (lysine 148) interacts with substrate. Histidine 150 is an active-site residue. Histidine 240 is a substrate binding site. N-linked (GlcNAc...) asparagine glycosylation is found at asparagine 277 and asparagine 289. Residues aspartate 298 and asparagine 299 each contribute to the Ca(2+) site. Lysine 316 contributes to the substrate binding site. N-linked (GlcNAc...) asparagine glycans are attached at residues asparagine 467 and asparagine 497. Residues 516–550 (FNGGAWGPWASDEEEEEEEEEAGRARSFSRGRRKK) are disordered. Residues 526–536 (SDEEEEEEEEE) show a composition bias toward acidic residues.

This sequence belongs to the sulfatase family. Requires Ca(2+) as cofactor. The oxidation of Cys-94 residue to 3-oxoalanine (also known as C(alpha)-formylglycine) by SUMF1/Sulfatase-modifying factor 1, seems critical for catalytic activity.

Its subcellular location is the secreted. It is found in the endoplasmic reticulum. Functionally, displays arylsulfatase activity at neutral pH, when co-expressed with SUMF1; arylsulfatase activity is measured in the secretion medium of retinal cell line, but no activity is recorded when measured in cell extracts. The chain is Arylsulfatase I (ARSI) from Canis lupus familiaris (Dog).